A 134-amino-acid chain; its full sequence is MSWQAYVDDHLMCDLEGNPGHHLAAAAILGQDGSVWAQSTAFPQFKPDEINGILTDFNEPGHLAPTGLHLGGAKYMVIQGEPGAVIRGKKGSGGITIKKTGQALVFGIYEEPVTPGQCNMVVERLGDYLLEQGL.

Cysteines 13 and 118 form a disulfide. An Involved in PIP2 interaction motif is present at residues 84–100; that stretch reads AVIRGKKGSGGITIKKT. T114 is subject to Phosphothreonine.

It belongs to the profilin family. Occurs in many kinds of cells as a complex with monomeric actin in a 1:1 ratio. Post-translationally, phosphorylated by MAP kinases.

It is found in the cytoplasm. Its subcellular location is the cytoskeleton. Functionally, binds to actin and affects the structure of the cytoskeleton. At high concentrations, profilin prevents the polymerization of actin, whereas it enhances it at low concentrations. The polypeptide is Profilin-2 (Olea europaea (Common olive)).